The sequence spans 314 residues: Leucotoxin LukE (314 aa).

The N-terminal stretch at 1-28 (MFKKKMLAASLSVGLIAPLASPIQESRA) is a signal peptide.

This sequence belongs to the aerolysin family. As to quaternary structure, toxicity requires sequential binding and synergistic association of a class S and a class F component which form heterooligomeric complexes. LukE (class S) associates with LukD (class F). LukE can also associate with HlgB.

Its subcellular location is the secreted. Functionally, part of a bi-component leucotoxin that acts by forming pores in the membrane of the target cells. LukE-LukD is as effective as the Panton-Valentine leucocidin (PVL) for inducing dermonecrosis when injected in the rabbit skin, but not hemolytic and poorly leucotoxic on human blood cells compared to other leucotoxins expressed by S.aureus. This Staphylococcus aureus protein is Leucotoxin LukE (lukE).